The following is a 52-amino-acid chain: Small ribosomal subunit protein uS14 (52 aa).

4 residues coordinate Zn(2+): Cys-17, Cys-20, Cys-35, and Cys-38.

Belongs to the universal ribosomal protein uS14 family. Zinc-binding uS14 subfamily. As to quaternary structure, part of the 30S ribosomal subunit. Zn(2+) serves as cofactor.

In terms of biological role, binds 16S rRNA, required for the assembly of 30S particles. The polypeptide is Small ribosomal subunit protein uS14 (Halobacterium salinarum (strain ATCC 700922 / JCM 11081 / NRC-1) (Halobacterium halobium)).